Reading from the N-terminus, the 158-residue chain is uncharacterized protein (158 aa).

The next 4 membrane-spanning stretches (helical) occupy residues 12–32 (IITL…AVVV), 39–59 (LDIL…SLSV), 90–110 (LIYL…FNTI), and 113–133 (IIST…WLPL).

It localises to the cell membrane. This is an uncharacterized protein from Mycoplasma genitalium (strain ATCC 33530 / DSM 19775 / NCTC 10195 / G37) (Mycoplasmoides genitalium).